The following is a 346-amino-acid chain: Biotin synthase (346 aa).

Residues 38-256 (RQVQVSTLLS…IAVARIMMPT (219 aa)) enclose the Radical SAM core domain. Positions 53, 57, and 60 each coordinate [4Fe-4S] cluster. [2Fe-2S] cluster is bound by residues cysteine 97, cysteine 128, cysteine 188, and arginine 260.

The protein belongs to the radical SAM superfamily. Biotin synthase family. Homodimer. It depends on [4Fe-4S] cluster as a cofactor. The cofactor is [2Fe-2S] cluster.

It catalyses the reaction (4R,5S)-dethiobiotin + (sulfur carrier)-SH + 2 reduced [2Fe-2S]-[ferredoxin] + 2 S-adenosyl-L-methionine = (sulfur carrier)-H + biotin + 2 5'-deoxyadenosine + 2 L-methionine + 2 oxidized [2Fe-2S]-[ferredoxin]. The protein operates within cofactor biosynthesis; biotin biosynthesis; biotin from 7,8-diaminononanoate: step 2/2. In terms of biological role, catalyzes the conversion of dethiobiotin (DTB) to biotin by the insertion of a sulfur atom into dethiobiotin via a radical-based mechanism. The sequence is that of Biotin synthase from Cronobacter sakazakii (strain ATCC BAA-894) (Enterobacter sakazakii).